The chain runs to 469 residues: MGKSLYDKVWDLHKVRTLPSGEDQLFIGLHLIHEVTSPQAFGMLRDLGLRVSMPERTFATLDHIVPTDNRKRPFKDTLAEGMVDALKKACTEQGVTFFDLESGKQGIVHIIGPELGLTQPGMTIACGDSHTSTHGAFGAIAFGIGTTQVRDVLATQTLSLQRLKVRRIQVEGKLGPGVYAKDIILEIIRRLGVSGGTGYAYEYGGSTIEGFSMEERMTLCNMSIEGGARVGYVNPDQVTFEYMKGRPYAPKGEAWEKALEYWRSIASDEDARYDDVVRINASEIAPTVTWGITPGQAISVKEKVPAAEDVTNESERALIREALEYMRLEGGKPIEGTKINVAFIGSCTNGRLSDFREVARRIQGHRVAPHVRALAVPGSMEVARAAEAEGLDRVFREAGFEWREPGCSMCLAMNPDKLIGDELCASSSNRNFKGRQGSPTGRTVLMSPVMVAAAAVRGEIADARDVFGI.

Cys347, Cys407, and Cys410 together coordinate [4Fe-4S] cluster.

The protein belongs to the aconitase/IPM isomerase family. LeuC type 1 subfamily. As to quaternary structure, heterodimer of LeuC and LeuD. Requires [4Fe-4S] cluster as cofactor.

It carries out the reaction (2R,3S)-3-isopropylmalate = (2S)-2-isopropylmalate. It functions in the pathway amino-acid biosynthesis; L-leucine biosynthesis; L-leucine from 3-methyl-2-oxobutanoate: step 2/4. Its function is as follows. Catalyzes the isomerization between 2-isopropylmalate and 3-isopropylmalate, via the formation of 2-isopropylmaleate. The sequence is that of 3-isopropylmalate dehydratase large subunit from Sorangium cellulosum (strain So ce56) (Polyangium cellulosum (strain So ce56)).